We begin with the raw amino-acid sequence, 2054 residues long: Multiple PDZ domain protein (2054 aa).

The 61-residue stretch at 3 to 63 folds into the L27 domain; that stretch reads ETIDKNRALQ…SLQQLKDQVN (61 aa). Residues 138 to 225 form the PDZ 1 domain; the sequence is IFELLKPPCG…TIQLVIARGS (88 aa). Residue S231 is modified to Phosphoserine. 4 consecutive PDZ domains span residues 258-338, 377-463, 545-626, and 692-778; these read TIEL…ARGA, DVEL…MRKG, VAHV…CRRT, and AIEL…VAKP. Residues S782 and S1065 each carry the phosphoserine modification. The PDZ 6 domain occupies 995–1076; it reads TVTIAKGSSS…IGPDIKITYV (82 aa). Residues 1110–1129 form a disordered region; that stretch reads PELPEREEGEGEESELQNAA. Residues 1138–1230 form the PDZ 7 domain; sequence RVELWREPSK…PVVFMVQSIV (93 aa). R1157 bears the Omega-N-methylarginine mark. A compositionally biased stretch (polar residues) spans 1261–1273; the sequence is LQLTSDKAPSQSE. The disordered stretch occupies residues 1261–1312; sequence LQLTSDKAPSQSESESEKATLCSVPSSSPSVFSEMSSDYAQPSATTVAEDED. Residues 1283 to 1297 show a composition bias toward low complexity; that stretch reads SVPSSSPSVFSEMSS. Residues 1337-1420 form the PDZ 8 domain; the sequence is MIELEKGHSG…KVKIIFIRNA (84 aa). Residues 1433–1454 are disordered; that stretch reads AADPLPSTSESPQNKEVEPSIT. One can recognise a PDZ 9 domain in the interval 1470-1551; the sequence is HLELPKDQGG…TVKLTVGAEN (82 aa). The tract at residues 1560–1594 is disordered; sequence AAVTASGERKDSSQTPAVPAPDLEPIPSTSRSSTP. PDZ domains are found at residues 1613 to 1696 and 1709 to 1791; these read TIEI…YRDE and TVEL…GRIK. The interval 1795–1834 is disordered; sequence FHSERRPSQSSQVSESSLSSFSLPRSGIHTSESSESSAKK. S1802 and S1808 each carry phosphoserine. A compositionally biased stretch (low complexity) spans 1802–1834; that stretch reads SQSSQVSESSLSSFSLPRSGIHTSESSESSAKK. PDZ domains follow at residues 1846–1932 and 1971–2054; these read TVEI…VAGG and TITL…MVLS.

As to quaternary structure, interacts with F11R/JAM, CLDN1, NG2, CXADR, CRB1, MPP4 and PALS1, HTR2A, HTR2B, PLEKHA1/TAPP1 and PLEKHA2/TAPP2. Interacts with CXADR. Interacts with HTR2C, CLDN5, DLG4, GRIN1, SYNGAP1, CAMK2A and CAMK2B. Interacts with FAT4 (via cytoplasmic domain). Interacts with DLL1. As to expression, abundant in all cerebral cortical layers, especially the piriform cortex, the pyramidal cells of the CA1-CA3 subfields of the hippocampus, as well as the granular layer of the dentate gyrus. Detected in the internal granular layer and the mitral cell layer of the olfactory bulb; in the medial habenular nucleus; and in amygdaloid, thalamic, hypothalamic, and pontine nuclei. In the cerebellum, found at high levels in the granular layer. Detected in the lateral ventricle. Expression overlaps with 5-HT2C receptor expression in all regions of the brain including the choroid plexus, where 5-HT2C receptors are highly enriched.

It localises to the endomembrane system. The protein localises to the cell junction. The protein resides in the tight junction. It is found in the synapse. Its subcellular location is the apical cell membrane. It localises to the postsynaptic density. The protein localises to the cell projection. The protein resides in the dendrite. It is found in the synaptosome. In terms of biological role, member of the NMDAR signaling complex that may play a role in control of AMPAR potentiation and synaptic plasticity in excitatory synapses. Promotes clustering of HT2RC at the cell surface. In Rattus norvegicus (Rat), this protein is Multiple PDZ domain protein (Mpdz).